Reading from the N-terminus, the 234-residue chain is MASLQQTLFSLQSKLPPSSFQIARSLPLRKTFPIRINNGGNAAGARMSATAASSYAMALADVAKRNDTMELTVTDIEKLEQVFSDPQVLNFFANPTITVEKKRQVIDDIVKSSSLQSHTSNFLNVLVDANRINIVTEIVKEFELVYNKLTDTQLAEVRSVVKLEAPQLAQIAKQVQKLTGAKNVRVKTVIDASLVAGFTIRYGESGSKLIDMSVKKQLEDIASQLELGEIQLAT.

The N-terminal 47 residues, 1-47 (MASLQQTLFSLQSKLPPSSFQIARSLPLRKTFPIRINNGGNAAGARM), are a transit peptide targeting the chloroplast. N-acetylserine is present on serine 48. Residue asparagine 66 is glycosylated (N-linked (GlcNAc...) asparagine). Threonine 234 carries the post-translational modification Phosphothreonine.

The protein belongs to the ATPase delta chain family. In terms of assembly, F-type ATPases have 2 components, F(1) - the catalytic core - and F(0) - the membrane proton channel. F(1) has five subunits: alpha(3), beta(3), gamma(1), delta(1), epsilon(1). CF(0) has four main subunits: a(1), b(1), b'(1) and c(10-14). The alpha and beta chains form an alternating ring which encloses part of the gamma chain. F(1) is attached to F(0) by a central stalk formed by the gamma and epsilon chains, while a peripheral stalk is formed by the delta, b and b' chains.

Its subcellular location is the plastid. It is found in the chloroplast thylakoid membrane. Functionally, f(1)F(0) ATP synthase produces ATP from ADP in the presence of a proton or sodium gradient. F-type ATPases consist of two structural domains, F(1) containing the extramembraneous catalytic core and F(0) containing the membrane proton channel, linked together by a central stalk and a peripheral stalk. During catalysis, ATP synthesis in the catalytic domain of F(1) is coupled via a rotary mechanism of the central stalk subunits to proton translocation (Potential). Essential for photosynthesis, probably by facilitating electron transport in both photosystems I and II. In terms of biological role, this protein is part of the stalk that links CF(0) to CF(1). It either transmits conformational changes from CF(0) to CF(1) or is implicated in proton conduction. This chain is ATP synthase subunit delta, chloroplastic, found in Arabidopsis thaliana (Mouse-ear cress).